A 118-amino-acid polypeptide reads, in one-letter code: MAYSKLRRNTSQRKSLLRSLVSDLIIKEKIITTESKAKELQKKVEKVITLAKKKSLHHRRQVFKKLFDENINKEQTVTQKLFTTTAEKYMKRNGGYTRIIKTVPRRGDAAPMAIITFV.

It belongs to the bacterial ribosomal protein bL17 family. In terms of assembly, part of the 50S ribosomal subunit. Contacts protein L32.

This chain is Large ribosomal subunit protein bL17, found in Phytoplasma mali (strain AT).